Consider the following 90-residue polypeptide: Small ribosomal subunit protein uS15c (90 aa).

Belongs to the universal ribosomal protein uS15 family. Part of the 30S ribosomal subunit.

It localises to the plastid. This is Small ribosomal subunit protein uS15c (rps15) from Cuscuta reflexa (Southern Asian dodder).